Reading from the N-terminus, the 333-residue chain is Homocysteine S-methyltransferase 2 (333 aa).

The 320-residue stretch at 8–327 (SMKDFLKQTG…TTIRAIHKRL (320 aa)) folds into the Hcy-binding domain. 3 residues coordinate Zn(2+): C245, C312, and C313.

In terms of assembly, monomer. Zn(2+) is required as a cofactor. As to expression, expressed predominantly in roots. Expressed in rosette leaves, cauline leaves and developing seeds.

It catalyses the reaction S-methyl-L-methionine + L-homocysteine = 2 L-methionine + H(+). Functionally, catalyzes methyl transfer from S-methylmethionine (SMM) to adenosyl-L-homocysteine (AdoMet). SMM degradation (by HMT-1, HMT-2 and HMT-3) and biosynthesis (by MMT1) constitute the SMM cycle in plants, which is probably required to achieve short term control of AdoMet level. In Arabidopsis thaliana (Mouse-ear cress), this protein is Homocysteine S-methyltransferase 2 (HMT-2).